Reading from the N-terminus, the 271-residue chain is Phycocyanobilin lyase subunit alpha (271 aa).

The protein belongs to the CpcE/RpcE/PecE family. In terms of assembly, cpcE and CpcF associate to form a lyase.

Functionally, required for the chromophorylation of the cpcA1 gene product. The polypeptide is Phycocyanobilin lyase subunit alpha (cpcE1) (Pseudanabaena tenuis (strain PCC 7409)).